The following is a 294-amino-acid chain: ATP phosphoribosyltransferase (294 aa).

The protein belongs to the ATP phosphoribosyltransferase family. Long subfamily. Mg(2+) serves as cofactor.

Its subcellular location is the cytoplasm. It carries out the reaction 1-(5-phospho-beta-D-ribosyl)-ATP + diphosphate = 5-phospho-alpha-D-ribose 1-diphosphate + ATP. Its pathway is amino-acid biosynthesis; L-histidine biosynthesis; L-histidine from 5-phospho-alpha-D-ribose 1-diphosphate: step 1/9. With respect to regulation, feedback inhibited by histidine. Its function is as follows. Catalyzes the condensation of ATP and 5-phosphoribose 1-diphosphate to form N'-(5'-phosphoribosyl)-ATP (PR-ATP). Has a crucial role in the pathway because the rate of histidine biosynthesis seems to be controlled primarily by regulation of HisG enzymatic activity. The chain is ATP phosphoribosyltransferase from Chlorobium luteolum (strain DSM 273 / BCRC 81028 / 2530) (Pelodictyon luteolum).